Reading from the N-terminus, the 725-residue chain is ATP-dependent DNA helicase II subunit 2 (725 aa).

One can recognise a Ku domain in the interval 232 to 478 (LTLGDPQKYP…QQAMSDYVDA (247 aa)).

It belongs to the ku80 family. In terms of assembly, heterodimer of mus-51/ku70 and mus-52/ku80.

It localises to the nucleus. It is found in the chromosome. The protein localises to the telomere. The enzyme catalyses ATP + H2O = ADP + phosphate + H(+). Its function is as follows. Single-stranded DNA-dependent ATP-dependent helicase. Involved in non-homologous end joining (NHEJ) DNA double strand break repair. DNA-binding is sequence-independent but has a high affinity to nicks in double-stranded DNA and to the ends of duplex DNA. Binds to naturally occurring chromosomal ends, and therefore provides chromosomal end protection. Required also for telomere recombination to repair telomeric ends in the absence of telomerase. ku70, of the ku70/ku80 heterodimer, binds to the stem loop of tlc1, the RNA component of telomerase. Involved in telomere maintenance. Interacts with telomeric repeats and subtelomeric sequences thereby controlling telomere length and protecting against subtelomeric rearrangement. Maintains telomeric chromatin, which is involved in silencing the expression of genes located at the telomere. Required for mating-type switching. The polypeptide is ATP-dependent DNA helicase II subunit 2 (mus-52) (Neurospora crassa (strain ATCC 24698 / 74-OR23-1A / CBS 708.71 / DSM 1257 / FGSC 987)).